Here is a 549-residue protein sequence, read N- to C-terminus: MELLLPHPSNSTPLTVLGFLDRAASVYGDCPSILHTANTVHTWSETHNRCLRIASALTSSSIGIKQGQVVSVVGPNVPSVYELQFAVPMSGAILNNINPRLDAHALSVLLRHSESRLVFVDHRSISLVLEAVSLFTQHEKPHLVLLDDDQENDSSSASDFLDTYEEIMERGNSRFKWIRPQTEWQPMVLNYTSGTTSSPKGVVLSHRAIFMLTVSSLLDWSVPNRPVYLWTLPMFHANGWGYTWGTAAVGATNICTRRVDAPTIYNLIDKHNVTHMCAAPMVLNMLINYPLSTPLKNPVQVMTSGAPPPATIISRAESLGFNVSHSYGLTETSGPVVSCAWKPKWDHLDPLERARLKSRQGVRTLGFTEVDVRDRKTGKSVKHDGVSVGEIVFRGSSVMLGYYKDPQGTAACMREDGWFYSGDIGVIHKDGYLEIKDRSKDVIICGGENISSAEIETVLYTNPVVKEAAVVAKPDKMWGETPCAFVSLKCDNNGDGSVPVTEREIREFCKTKLPKYMVPRKVIFQEELPKTSTGKIQKFLLRQMAKTLS.

It belongs to the ATP-dependent AMP-binding enzyme family. Expressed at low levels in roots.

In terms of biological role, may act as an acid--thiol ligase that activates carboxylic acids by forming acyl-CoAs. In Arabidopsis thaliana (Mouse-ear cress), this protein is Probable acyl-activating enzyme 10 (AEE10).